Reading from the N-terminus, the 227-residue chain is Enolase-phosphatase E1 (227 aa).

It belongs to the HAD-like hydrolase superfamily. MasA/MtnC family. In terms of assembly, monomer. Requires Mg(2+) as cofactor.

It catalyses the reaction 5-methylsulfanyl-2,3-dioxopentyl phosphate + H2O = 1,2-dihydroxy-5-(methylsulfanyl)pent-1-en-3-one + phosphate. It participates in amino-acid biosynthesis; L-methionine biosynthesis via salvage pathway; L-methionine from S-methyl-5-thio-alpha-D-ribose 1-phosphate: step 3/6. It functions in the pathway amino-acid biosynthesis; L-methionine biosynthesis via salvage pathway; L-methionine from S-methyl-5-thio-alpha-D-ribose 1-phosphate: step 4/6. Functionally, bifunctional enzyme that catalyzes the enolization of 2,3-diketo-5-methylthiopentyl-1-phosphate (DK-MTP-1-P) into the intermediate 2-hydroxy-3-keto-5-methylthiopentenyl-1-phosphate (HK-MTPenyl-1-P), which is then dephosphorylated to form the acireductone 1,2-dihydroxy-3-keto-5-methylthiopentene (DHK-MTPene). This Pseudomonas savastanoi pv. phaseolicola (strain 1448A / Race 6) (Pseudomonas syringae pv. phaseolicola (strain 1448A / Race 6)) protein is Enolase-phosphatase E1.